We begin with the raw amino-acid sequence, 691 residues long: Elongation factor G (691 aa).

A tr-type G domain is found at 10–284 (KRLRNIGIAA…AVVDYLPSPL (275 aa)). Residues 19–26 (AHIDAGKT), 83–87 (DTPGH), and 137–140 (NKMD) each bind GTP.

Belongs to the TRAFAC class translation factor GTPase superfamily. Classic translation factor GTPase family. EF-G/EF-2 subfamily.

Its subcellular location is the cytoplasm. Functionally, catalyzes the GTP-dependent ribosomal translocation step during translation elongation. During this step, the ribosome changes from the pre-translocational (PRE) to the post-translocational (POST) state as the newly formed A-site-bound peptidyl-tRNA and P-site-bound deacylated tRNA move to the P and E sites, respectively. Catalyzes the coordinated movement of the two tRNA molecules, the mRNA and conformational changes in the ribosome. In Thermus thermophilus (strain ATCC 27634 / DSM 579 / HB8), this protein is Elongation factor G (fusA).